Consider the following 79-residue polypeptide: MLLLIKLGFIGLAIETLIVIVVWAIVYRIYREVKVEEKISQLRQRIRDRAEDSGNESDGDAEELANLLPPDRIDQDNWV.

Topologically, residues 1 to 7 (MLLLIKL) are extracellular. The chain crosses the membrane as a helical span at residues 8-28 (GFIGLAIETLIVIVVWAIVYR). At 29 to 79 (IYREVKVEEKISQLRQRIRDRAEDSGNESDGDAEELANLLPPDRIDQDNWV) the chain is on the cytoplasmic side. The interval 48–79 (DRAEDSGNESDGDAEELANLLPPDRIDQDNWV) is disordered. Phosphoserine; by host CK2 occurs at positions 53 and 57. Over residues 53–63 (SGNESDGDAEE) the composition is skewed to acidic residues.

The protein belongs to the HIV-1 VPU protein family. As to quaternary structure, homopentamer. Interacts with host CD4 and BRTC; these interactions induce proteasomal degradation of CD4. Interacts with host BST2; this interaction leads to the degradation of host BST2. Interacts with host FBXW11. Interacts with host AP1M1; this interaction plays a role in the mistrafficking and subsequent degradation of host BST2. Interacts with host RANBP2; this interaction allows Vpu to down-regulate host BLM sumoylation. In terms of processing, phosphorylated by host CK2. This phosphorylation is necessary for interaction with human BTRC and degradation of CD4.

It is found in the host membrane. Its activity is regulated as follows. Ion channel activity is inhibited by hexamethylene amiloride in vitro. Enhances virion budding by targeting host CD4 and Tetherin/BST2 to proteasome degradation. Degradation of CD4 prevents any unwanted premature interactions between viral Env and its host receptor CD4 in the endoplasmic reticulum. Degradation of antiretroviral protein Tetherin/BST2 is important for virion budding, as BST2 tethers new viral particles to the host cell membrane. Mechanistically, Vpu bridges either CD4 or BST2 to BTRC, a substrate recognition subunit of the Skp1/Cullin/F-box protein E3 ubiquitin ligase, induces their ubiquitination and subsequent proteasomal degradation. The alteration of the E3 ligase specificity by Vpu seems to promote the degradation of host IKBKB, leading to NF-kappa-B down-regulation and subsequent apoptosis. Acts as a viroporin that forms an oligomeric ion channel in membranes. Modulates the host DNA repair mechanisms to promote degradation of nuclear viral cDNA in cells that are already productively infected in order to suppress immune sensing and proviral hyper-integration (superinfection). Manipulates PML-NBs and modulates SUMOylation of host BLM protein thereby enhancing its DNA-end processing activity toward viral unintegrated linear DNA. Also inhibits RAD52-mediated homologous repair of viral cDNA, preventing the generation of dead-end circular forms of single copies of the long terminal repeat and permitting sustained nucleolytic attack. This is Protein Vpu from Pan troglodytes (Chimpanzee).